Consider the following 128-residue polypeptide: Cytochrome c-type biogenesis protein CcmE (128 aa).

At 1–8 (MQKRVRNR) the chain is on the cytoplasmic side. The chain crosses the membrane as a helical; Signal-anchor for type II membrane protein span at residues 9–29 (LITIIICFCSAALGISIVLYN). Topologically, residues 30-128 (LEKNIVFFLP…KHDENYRPPS (99 aa)) are periplasmic. Heme-binding residues include His120 and Tyr124.

This sequence belongs to the CcmE/CycJ family.

It localises to the cell inner membrane. Its function is as follows. Heme chaperone required for the biogenesis of c-type cytochromes. Transiently binds heme delivered by CcmC and transfers the heme to apo-cytochromes in a process facilitated by CcmF and CcmH. This is Cytochrome c-type biogenesis protein CcmE from Rickettsia felis (strain ATCC VR-1525 / URRWXCal2) (Rickettsia azadi).